The following is a 198-amino-acid chain: Large ribosomal subunit protein bL9 (198 aa).

The span at 156–166 shows a compositional bias: basic and acidic residues; the sequence is RGEDISTRQED. Positions 156-198 are disordered; sequence RGEDISTRQEDQDAAAEALAAAGEFFDPEAHNDGEQEEEAGDK.

This sequence belongs to the bacterial ribosomal protein bL9 family.

Functionally, binds to the 23S rRNA. This Rhodopseudomonas palustris (strain BisB18) protein is Large ribosomal subunit protein bL9.